We begin with the raw amino-acid sequence, 513 residues long: uncharacterized protein (513 aa).

The next 13 helical transmembrane spans lie at 3-23, 47-67, 71-91, 129-149, 153-173, 177-197, 233-253, 273-293, 320-340, 374-394, 395-415, 424-444, and 462-482; these read MTAFLLFLAIVGLTLIITYFA, LAIAGDYMSAASFLGIAGMIA, FDGFFYSIGFLVAYLVVLYIV, TFYMIAQLVGAGALIKLLLGL, AAVLIVGVLMTIYVVFGGMIA, VQIIKAVLLMAGTLVISIIVF, ETLSLNLALVLGTAGLPHILI, WIIGVFYIMTVFLGFGAAAFV, FLFAFVSAIAFATILAVVTGL, ASVAVSVLSILLAIFAQSLNV, AFLVALAFAVAASANLPLIVF, ASGALWGSLTGLISALVLVSM, and LIPLSNPGIISIPLGFLGAWL.

The protein belongs to the sodium:solute symporter (SSF) (TC 2.A.21) family.

Its subcellular location is the cell membrane. This is an uncharacterized protein from Bacillus subtilis (strain 168).